The primary structure comprises 309 residues: Dicarboxylate carrier SLC25A8 (309 aa).

Residues 1-16 (MVGFKATDVPPTATVK) lie on the Mitochondrial intermembrane side of the membrane. 3 Solcar repeats span residues 11–106 (PTAT…VKQF), 114–203 (ASIG…IKDA), and 212–297 (DDLP…LKRA). The interval 16–63 (KFLGAGTAACIADLITFPLDTAKVRLQIQGESQGPVRATASAQYRGVM) is important for interaction with long-chain fatty acids. The helical transmembrane segment at 17-40 (FLGAGTAACIADLITFPLDTAKVR) threads the bilayer. The Mitochondrial matrix portion of the chain corresponds to 41-77 (LQIQGESQGPVRATASAQYRGVMGTILTMVRTEGPRS). A helical transmembrane segment spans residues 78-103 (LYNGLVAGLQRQMSFASVRIGLYDSV). Over 104–119 (KQFYTKGSEHASIGSR) the chain is Mitochondrial intermembrane. The chain crosses the membrane as a helical span at residues 120-145 (LLAGSTTGALAVAVAQPTDVVKVRFQ). At 146 to 173 (AQARAGGGRRYQSTVNAYKTIAREEGFR) the chain is on the mitochondrial matrix side. Residues 174–199 (GLWKGTSPNVARNAIVNCAELVTYDL) traverse the membrane as a helical segment. At 200–217 (IKDALLKANLMTDDLPCH) the chain is on the mitochondrial intermembrane side. The helical transmembrane segment at 218-242 (FTSAFGAGFCTTVIASPVDVVKTRY) threads the bilayer. Over 243–268 (MNSALGQYSSAGHCALTMLQKEGPRA) the chain is Mitochondrial matrix. The chain crosses the membrane as a helical span at residues 269 to 294 (FYKGFMPSFLRLGSWNVVMFVTYEQL). Residues 278–285 (LRLGSWNV) are important for interaction with long-chain fatty acids. At 295 to 309 (KRALMAACTSREAPF) the chain is on the mitochondrial intermembrane side.

It belongs to the mitochondrial carrier (TC 2.A.29) family. As to quaternary structure, homotetramer. Adopts an asymmetrical dimer of dimers functional form. In terms of tissue distribution, widely expressed in adult human tissues, including tissues rich in macrophages. Most expressed in white adipose tissue and skeletal muscle.

It is found in the mitochondrion inner membrane. The catalysed reaction is L-aspartate(out) + phosphate(in) + H(+)(in) = L-aspartate(in) + phosphate(out) + H(+)(out). The enzyme catalyses oxaloacetate(out) + phosphate(in) + H(+)(in) = oxaloacetate(in) + phosphate(out) + H(+)(out). It catalyses the reaction (S)-malate(out) + phosphate(in) + H(+)(in) = (S)-malate(in) + phosphate(out) + H(+)(out). It carries out the reaction malonate(out) + phosphate(in) + H(+)(in) = malonate(in) + phosphate(out) + H(+)(out). The catalysed reaction is sulfate(out) + phosphate(in) + H(+)(in) = sulfate(in) + phosphate(out) + H(+)(out). The enzyme catalyses (S)-malate(out) = (S)-malate(in). It catalyses the reaction L-aspartate(out) = L-aspartate(in). It carries out the reaction phosphate(in) = phosphate(out). The catalysed reaction is chloride(in) = chloride(out). The enzyme catalyses H(+)(in) = H(+)(out). It catalyses the reaction a long-chain fatty acid(out) = a long-chain fatty acid(in). With respect to regulation, inhibited by pyridoxal- 5'-phosphate, bathophenanthroline, tannic acid, bromocresol purple, butylmalonate and phenylsuccinate. Proton conductance is activated by cardiolipin and long-chain free fatty acids and inhibited by purine nucleotides ATP and ADP. Chloride ion transporter activity is inhibited by long-chain free fatty acids. Its function is as follows. Antiporter that exports dicarboxylate intermediates of the Krebs cycle in exchange for phosphate plus a proton across the inner membrane of mitochondria, a process driven by mitochondrial motive force with an overall impact on glycolysis, glutaminolysis and glutathione-dependent redox balance. Continuous export of oxaloacetate and related four-carbon dicarboxylates from mitochondrial matrix into the cytosol negatively regulates the oxidation of acetyl-CoA substrates via the Krebs cycle, lowering the ATP/ADP ratio and reactive oxygen species (ROS) production. May mediate inducible proton entry into the mitochondrial matrix affecting ATP turnover as a protection mechanism against oxidative stress. The proton currents are most likely associated with fatty acid flipping across the inner membrane of mitochondria in a metabolic process regulated by free fatty acids and purine nucleotides. Regulates the use of glucose as a source of energy. Required for glucose-induced DRP1-dependent mitochondrial fission and neuron activation in the ventromedial nucleus of the hypothalamus (VMH). This mitochondrial adaptation mechanism modulates the VMH pool of glucose-excited neurons with an impact on systemic glucose homeostasis. Regulates ROS levels and metabolic reprogramming of macrophages during the resolution phase of inflammation. Attenuates ROS production in response to IL33 to preserve the integrity of the Krebs cycle required for persistent production of itaconate and subsequent GATA3-dependent differentiation of inflammation-resolving alternatively activated macrophages. Can unidirectionally transport anions including L-malate, L-aspartate, phosphate and chloride ions. Does not mediate adaptive thermogenesis. The polypeptide is Dicarboxylate carrier SLC25A8 (UCP2) (Homo sapiens (Human)).